The following is a 978-amino-acid chain: Chitin synthase 3 (978 aa).

A compositionally biased stretch (low complexity) spans Met-1 to Asn-13. Disordered regions lie at residues Met-1–His-95 and Gly-108–Pro-127. N-linked (GlcNAc...) asparagine glycosylation is present at Asn-72. A glycan (N-linked (GlcNAc...) asparagine) is linked at Asn-604. The next 7 helical transmembrane spans lie at Leu-641–Ile-661, Ile-686–Ala-706, Val-719–Leu-739, Leu-775–Leu-795, Ser-803–Phe-823, Val-908–Ile-928, and Val-946–Ile-966.

It belongs to the chitin synthase family. Class III subfamily.

The protein localises to the cell membrane. The enzyme catalyses [(1-&gt;4)-N-acetyl-beta-D-glucosaminyl](n) + UDP-N-acetyl-alpha-D-glucosamine = [(1-&gt;4)-N-acetyl-beta-D-glucosaminyl](n+1) + UDP + H(+). Its function is as follows. Polymerizes chitin, a structural polymer of the cell wall and septum, by transferring the sugar moiety of UDP-GlcNAc to the non-reducing end of the growing chitin polymer. Is essential for viability. The protein is Chitin synthase 3 of Fusarium oxysporum f. sp. lycopersici (strain 4287 / CBS 123668 / FGSC 9935 / NRRL 34936) (Fusarium vascular wilt of tomato).